Here is a 508-residue protein sequence, read N- to C-terminus: Cytochrome P450 monooxygenase BipB (508 aa).

A helical membrane pass occupies residues 11-31 (ELAWLLLGPLVLFYVFKLFIY). C448 lines the heme pocket.

It belongs to the cytochrome P450 family. Heme is required as a cofactor.

Its subcellular location is the membrane. Its pathway is sesquiterpene biosynthesis. In terms of biological role, cytochrome P450 monooxygenase; part of the minimal biosynthetic bip cluster that mediates the biosynthesis of bridged polycyclic sesquiterpenoids derived from sativene, isosativene, and longifolene. The sesquiterpene cyclase BipA acts as a versatile cyclase that converts farnesyl diphosphate (FPP) into (-)-sativene as the dominant product and (-)-isosativene and (-)-longifolene as minor ones. The cytochrome P450 monooxygenase BipB then hydroxylates different enantiomeric sesquiterpenes, such as (-)-longifolene and (+)-longifolene, at C-15 and C-14. The C-15- or both C-15- and C-14-hydroxylated products are further oxidized by unclustered oxidases, resulting in a structurally diverse array of sesquiterpenoids. The BipB-catalyzed hydroxylation at C-15 serves as an initiator for the oxidation by the unclustered oxidases. This chain is Cytochrome P450 monooxygenase BipB, found in Cochliobolus sativus (Common root rot and spot blotch fungus).